We begin with the raw amino-acid sequence, 379 residues long: 2-nitroimidazole nitrohydrolase (379 aa).

Cysteine 357 (amidino-cysteine intermediate) is an active-site residue.

This sequence belongs to the arginine deiminase family.

The enzyme catalyses 2-nitroimidazole + H2O = 1,3-dihydro-2H-imidazol-2-one + nitrite + H(+). In terms of biological role, involved in the biodegradation of 2-Nitroimidazole (2NI) which is a natural antibiotic and an analog of the synthetic nitroimidazoles used for treatment of tuberculosis, Chagas disease (also called American Trypanosomiasis) and cancer. Catalyzes the hydrolytic denitration of 2NI to produce imidazol-2-one and nitrite. It is also active against the 2NI synthetic derivative benznidazole. NnhA confers drug resistance to 2NI. In Mycobacterium sp. (strain JS330), this protein is 2-nitroimidazole nitrohydrolase (nnhA).